We begin with the raw amino-acid sequence, 131 residues long: Agouti-signaling protein (131 aa).

The first 22 residues, 1–22 (MDVTRLLLATLVGFLCFFTVHS), serve as a signal peptide directing secretion. The N-linked (GlcNAc...) asparagine glycan is linked to Asn39. A disordered region spans residues 58–100 (KSKKISRKEAEKRKRSSKKKASMKKVARPPPPSPCVATRDSCK). Residues 70–84 (RKRSSKKKASMKKVA) show a composition bias toward basic residues. 5 cysteine pairs are disulfide-bonded: Cys92-Cys107, Cys99-Cys113, Cys106-Cys124, Cys110-Cys131, and Cys115-Cys122. One can recognise an Agouti domain in the interval 92 to 131 (CVATRDSCKPPAPACCDPCASCQCRFFGSACTCRVLNPNC).

Epithelial cells of the hair follicles and the epidermis.

It is found in the secreted. In terms of biological role, involved in the regulation of melanogenesis. The binding of ASP to MC1R precludes alpha-MSH initiated signaling and thus blocks production of cAMP, leading to a down-regulation of eumelanogenesis (brown/black pigment) and thus increasing synthesis of pheomelanin (yellow/red pigment). Causes hair follicle melanocytes to synthesize phaeomelanin instead of black or brown pigment eumelanin and produces hairs with a subapical yellow band on an otherwise black or brown background when expressed during the mid-portion of hair growth. The sequence is that of Agouti-signaling protein (Asip) from Mus musculus (Mouse).